A 127-amino-acid chain; its full sequence is MSKLEKLVEELSTLSVLEAAELSKLLEEKWGVSAAAPVAVAAAGGAAAAPAEAAEEQTEFTVVLVDGGDKKINVIKEVRGVRPDLGLKEAKDLVEGAPQNVVENVSKQQAEEISKKLTEAGAKIQIK.

It belongs to the bacterial ribosomal protein bL12 family. Homodimer. Part of the ribosomal stalk of the 50S ribosomal subunit. Forms a multimeric L10(L12)X complex, where L10 forms an elongated spine to which 2 to 4 L12 dimers bind in a sequential fashion. Binds GTP-bound translation factors.

Its function is as follows. Forms part of the ribosomal stalk which helps the ribosome interact with GTP-bound translation factors. Is thus essential for accurate translation. The protein is Large ribosomal subunit protein bL12 of Caulobacter vibrioides (strain ATCC 19089 / CIP 103742 / CB 15) (Caulobacter crescentus).